The primary structure comprises 555 residues: Glucose-6-phosphate isomerase (555 aa).

Glu365 functions as the Proton donor in the catalytic mechanism. Residues His396 and Lys522 contribute to the active site.

Belongs to the GPI family.

Its subcellular location is the cytoplasm. The catalysed reaction is alpha-D-glucose 6-phosphate = beta-D-fructose 6-phosphate. The protein operates within carbohydrate biosynthesis; gluconeogenesis. It functions in the pathway carbohydrate degradation; glycolysis; D-glyceraldehyde 3-phosphate and glycerone phosphate from D-glucose: step 2/4. Its function is as follows. Catalyzes the reversible isomerization of glucose-6-phosphate to fructose-6-phosphate. The protein is Glucose-6-phosphate isomerase of Psychrobacter cryohalolentis (strain ATCC BAA-1226 / DSM 17306 / VKM B-2378 / K5).